Consider the following 113-residue polypeptide: Large ribosomal subunit protein eL31 (113 aa).

This sequence belongs to the eukaryotic ribosomal protein eL31 family.

The polypeptide is Large ribosomal subunit protein eL31 (RPL31) (Candida glabrata (strain ATCC 2001 / BCRC 20586 / JCM 3761 / NBRC 0622 / NRRL Y-65 / CBS 138) (Yeast)).